The chain runs to 1179 residues: MSETQSDPIDVSKFKNGDDVHFDYNSTTNDQTINSTNVQKKKKKKKSKNKHKGSPNVEATLNDPDVEYPTSRVIKQAPNGDVIIESLDEPSDAHTKSVTANIWDNATLEEQENLKAFWESLDEAQKIELVKIDKKSIMDIFKNESKTVNTSNNHQNNSNTQGGSTSTSGGALNGSSTNVNIPGAPSNSSNGACTCSYCGRKNNFIEDELENIYDNHFDDIIDFIHEVRDINDLNALPGLLFGGFHMLEEEHKLQKRQQKYKYKQERDAHHDHHNHEPGHICSDTGSSGDYDGSTQQDQQHQYEHEIEHAFQEDEHEDECGHKNDHSHSHSHSHTENHNHSHSYDPNHNHSHSHFQYDQIEELNNEDELSQEAVLQKSLDDELNKELGDESNNNQSSIATKEQRVFHKLLDPKLFEALENLDFEKMKDTPANNHSAHILEKAGSLRDIIRDLHKADKVELEKGMAFLQNMGKIFSSDMSNAMNHDTLNDQISNGLSSFAEDLLKNDGNSFIDMMESLSESRTAREDLLKEKFDKEPSAAWIDEDDHTKSDTDISIPKPDLHQVQELEEELNDEYDEVDEDDDEGEEEGEEEEEELDDEEFEEDEEEDASDTESEISEEEKMQEIRRLFLIQVIKLFQERLKNAYKEKLSQDRTRTLIEELEAEENAKKEREMKKLRQKEKAKEKKRLQQLAKEEERRKKEEEQKAKEEELKQKQEALRAEQRRKKEEAKQKREEEKRKRIEELKRKELEHQKRLEAQRKKEEETKKLKDEKKKKIEEERKQKEEEKRQKELQKKLVEEERSKSAKKQDHKETGSSEDISQLSRDLENARLGQNFNIPSPVVPDTLLAQPQEPRVKSPTKNHILDQLYLAKPRSLSNSTNSTPQINNVTPGYIPDLSSNSMLPSVLSPSGHNILPNNGNVNNQAVPSPWSSQAFNANTQAPPVYQPQLSSNAFSPFNSSLSQNSLSSNANENLNTNPLNTTGFNEPFATAAQPSSVWNPGATSRNNSIWSNSPNVASNSTLWGNSVPAPPVGAAVGGNPNSLDSDLIQAAAYQAFQFLQNSNQLEFGVAPSLKLFQTAKTILSNQGLTLNQFLTSCRNTGSLSGYGFDFIYDDFGTVTHIKASSTNIPQQPPHNNVNTQSINSLGLGNAAVNDNESSLLNTLSDINNNPNSFSNGVRGLWN.

Disordered stretches follow at residues 1–64, 147–189, 255–351, 537–619, 660–819, 928–947, and 957–997; these read MSET…LNDP, TVNT…SNSS, KRQQ…NHSH, AAWI…EEEK, EAEE…DISQ, SSQA…PQLS, and SLSQ…VWNP. Residues 10–22 are compositionally biased toward basic and acidic residues; sequence DVSKFKNGDDVHF. The segment covering 24 to 38 has biased composition (polar residues); sequence YNSTTNDQTINSTNV. The span at 39–53 shows a compositional bias: basic residues; it reads QKKKKKKKSKNKHKG. The span at 149–178 shows a compositional bias: low complexity; sequence NTSNNHQNNSNTQGGSTSTSGGALNGSSTN. The span at 262 to 278 shows a compositional bias: basic and acidic residues; sequence YKQERDAHHDHHNHEPG. Low complexity predominate over residues 282–299; that stretch reads SDTGSSGDYDGSTQQDQQ. Over residues 300–347 the composition is skewed to basic and acidic residues; the sequence is HQYEHEIEHAFQEDEHEDECGHKNDHSHSHSHSHTENHNHSHSYDPNH. Positions 564–616 are enriched in acidic residues; it reads ELEEELNDEYDEVDEDDDEGEEEGEEEEEELDDEEFEEDEEEDASDTESEISE. The stretch at 648–810 forms a coiled coil; it reads SQDRTRTLIE…KSAKKQDHKE (163 aa). Composition is skewed to basic and acidic residues over residues 663–681 and 690–812; these read ENAK…EKAK and AKEE…KETG. A compositionally biased stretch (low complexity) spans 957–977; it reads SLSQNSLSSNANENLNTNPLN.

The protein belongs to the NST1 family.

It localises to the cytoplasm. Its function is as follows. May act as a negative regulator of salt tolerance. The protein is Stress response protein NST1 (NST1) of Debaryomyces hansenii (strain ATCC 36239 / CBS 767 / BCRC 21394 / JCM 1990 / NBRC 0083 / IGC 2968) (Yeast).